The following is a 211-amino-acid chain: Mitotic spindle assembly checkpoint protein MAD2B (211 aa).

The 191-residue stretch at 13-203 (QVVADILCEF…SDILKMQLYV (191 aa)) folds into the HORMA domain.

Homooligomer. Interacts with rev1. Interacts with rev3l. Interacts with fzr1 (in complex with the anaphase promoting complex APC). May interact with cdc20.

Its subcellular location is the nucleus. The protein resides in the cytoplasm. The protein localises to the cytoskeleton. It is found in the spindle. Functionally, adapter protein able to interact with different proteins and involved in different biological processes. Mediates the interaction between the error-prone DNA polymerase zeta catalytic subunit rev3l and the inserter polymerase rev1, thereby mediating the second polymerase switching in translesion DNA synthesis. Translesion DNA synthesis releases the replication blockade of replicative polymerases, stalled in presence of DNA lesions. May also play a role in signal transduction in response to DNA damage. May regulate the activation of the anaphase promoting complex APC thereby regulating progression through the cell cycle. Through transcriptional regulation may play a role in epithelial-mesenchymal transdifferentiation. In Danio rerio (Zebrafish), this protein is Mitotic spindle assembly checkpoint protein MAD2B (mad2l2).